The following is a 273-amino-acid chain: Alkaline ceramidase 1 (273 aa).

Residues 1–36 (MHVPGTRAKMSSIFAYQSSEVDWCESNFQHSELVAE) are Lumenal-facing. Ca(2+)-binding residues include Asp22, Trp23, Glu25, Asn27, and Glu36. Residues 37-57 (FYNTFSNVFFLIFGPLMMFLM) traverse the membrane as a helical segment. The Cytoplasmic segment spans residues 58–72 (HPYAQKRTRCFYGVS). 2 consecutive transmembrane segments (helical) span residues 73-93 (VLFM…SFLG) and 94-114 (QLLD…VWLP). His86 contributes to the Zn(2+) binding site. Residues 115–126 (RCYFPKFVKGNR) lie on the Cytoplasmic side of the membrane. A helical membrane pass occupies residues 127 to 147 (FYFSCLVTITTIISTFLTFVK). Topologically, residues 148–149 (PT) are lumenal. A helical membrane pass occupies residues 150-167 (VNAYALNSIAIHILYIVR). Over 168-177 (TEYKKIRDDD) the chain is Cytoplasmic. A helical membrane pass occupies residues 178–198 (LRHLIAVSVVLWAAALTSWIS). The Lumenal portion of the chain corresponds to 199 to 215 (DRVLCSFWQRIHFYYLH). Zn(2+) is bound by residues His215 and His219. Residues 216-236 (SIWHVLISITFPYGIVTMALV) traverse the membrane as a helical segment. Residues 237–273 (DAKYEMPDKTLKVHYWPRDSWVIGLPYVEIQENDKNC) are Cytoplasmic-facing.

This sequence belongs to the alkaline ceramidase family. The cofactor is Zn(2+). In terms of tissue distribution, highly expressed in skin. Weakly or not expressed in other tissues. Expressed by granular layer of interfollicular epidermis, sebaceous glands and infundibulum.

The protein localises to the endoplasmic reticulum membrane. The enzyme catalyses an N-acylsphing-4-enine + H2O = sphing-4-enine + a fatty acid. It carries out the reaction N-tetracosanoyl-sphing-4-enine + H2O = tetracosanoate + sphing-4-enine. It catalyses the reaction an N-acylsphinganine + H2O = sphinganine + a fatty acid. The catalysed reaction is N-(9Z-octadecenoyl)-sphing-4-enine + H2O = sphing-4-enine + (9Z)-octadecenoate. The enzyme catalyses N-(15Z-tetracosenoyl)-sphing-4-enine + H2O = (15Z)-tetracosenoate + sphing-4-enine. Its pathway is lipid metabolism; sphingolipid metabolism. With respect to regulation, inhibited by sphingosine. Inhibited by Mn(2+), Zn(2+), and Cu(2+) in a dose-dependent manner. Slightly activated by Ca(2+) in a dose-dependent manner. Its function is as follows. Endoplasmic reticulum ceramidase that catalyzes the hydrolysis of ceramides into sphingosine and free fatty acids at alkaline pH. Ceramides, sphingosine, and its phosphorylated form sphingosine-1-phosphate are bioactive lipids that mediate cellular signaling pathways regulating several biological processes including cell proliferation, apoptosis and differentiation. Exhibits a strong substrate specificity towards the natural stereoisomer of ceramides with D-erythro-sphingosine as a backbone and has a higher activity towards very long-chain unsaturated fatty acids like the C24:1-ceramide. May also hydrolyze dihydroceramides to produce dihydrosphingosine. ACER1 is a skin-specific ceramidase that regulates the levels of ceramides, sphingosine and sphingosine-1-phosphate in the epidermis, mediates the calcium-induced differentiation of epidermal keratinocytes and more generally plays an important role in skin homeostasis. This is Alkaline ceramidase 1 from Mus musculus (Mouse).